Reading from the N-terminus, the 378-residue chain is Protein RecA (378 aa).

Residue 79 to 86 (GPESSGKT) coordinates ATP.

This sequence belongs to the RecA family.

Its subcellular location is the cytoplasm. Can catalyze the hydrolysis of ATP in the presence of single-stranded DNA, the ATP-dependent uptake of single-stranded DNA by duplex DNA, and the ATP-dependent hybridization of homologous single-stranded DNAs. It interacts with LexA causing its activation and leading to its autocatalytic cleavage. The sequence is that of Protein RecA from Streptococcus pyogenes serotype M12 (strain MGAS2096).